The primary structure comprises 560 residues: Probable pectinesterase/pectinesterase inhibitor 20 (560 aa).

The signal sequence occupies residues 1 to 24 (MSQKLMFLFTLACLSSLPSPFISA). The segment at 25–179 (QIPAIGNATS…TKLYGVSLAL (155 aa)) is pectinesterase inhibitor 20. 7 N-linked (GlcNAc...) asparagine glycosylation sites follow: asparagine 31, asparagine 168, asparagine 251, asparagine 255, asparagine 268, asparagine 307, and asparagine 314. Residues 246–544 (VTVIQNGTGN…FTVTNFLVGE (299 aa)) form a pectinesterase 20 region. Threonine 323 is a binding site for substrate. Asparagine 340 carries an N-linked (GlcNAc...) asparagine glycan. Glutamine 353 provides a ligand contact to substrate. Aspartate 376 acts as the Proton donor; for pectinesterase activity in catalysis. An intrachain disulfide couples cysteine 390 to cysteine 410. The active-site Nucleophile; for pectinesterase activity is the aspartate 397. The segment at 417–441 (PRKGQSNEVTAQGRTDPNQNTGTAI) is disordered. The span at 419–439 (KGQSNEVTAQGRTDPNQNTGT) shows a compositional bias: polar residues. Residue asparagine 456 is glycosylated (N-linked (GlcNAc...) asparagine). The substrate site is built by arginine 465 and tryptophan 467. Residues asparagine 507, asparagine 528, and asparagine 534 are each glycosylated (N-linked (GlcNAc...) asparagine).

The protein in the N-terminal section; belongs to the PMEI family. This sequence in the C-terminal section; belongs to the pectinesterase family. In terms of tissue distribution, expressed in flower buds.

It is found in the secreted. The protein resides in the cell wall. It catalyses the reaction [(1-&gt;4)-alpha-D-galacturonosyl methyl ester](n) + n H2O = [(1-&gt;4)-alpha-D-galacturonosyl](n) + n methanol + n H(+). The protein operates within glycan metabolism; pectin degradation; 2-dehydro-3-deoxy-D-gluconate from pectin: step 1/5. Acts in the modification of cell walls via demethylesterification of cell wall pectin. The sequence is that of Probable pectinesterase/pectinesterase inhibitor 20 (PME20) from Arabidopsis thaliana (Mouse-ear cress).